The following is a 741-amino-acid chain: MDIEDEENMSSSSTDVKENRNLDNVSPKDGSTPGPGEGSQLSNGGGGGPGRKRPLEEGSNGHSKYRLKKRRKTPGPVLPKNALMQLNEIKPGLQYTLLSQTGPVHAPLFVMSVEVNGQVFEGSGPTKKKAKLHAAEKALRSFVQFPNASEAHLAMGRTLSVNTDFTSDQADFPDTLFNGFETPDKAEPPFYVGSNGDDSFSSSGDLSLSASPVPASLAQPPLPVLPPFPPPSGKNPVMILNELRPGLKYDFLSESGESHAKSFVMSVVVDGQFFEGSGRNKKLAKARAAQSALAAIFNLHLDQTPSRQPIPSEGLQLHLPQVLADAVSRLVLGKFGDLTDNFSSPHARRKVLAGVVMTTGTDVKDAKVISVSTGTKCINGEYMSDRGLALNDCHAEIISRRSLLRFLYTQLELYLNNKDDQKRSIFQKSERGGFRLKENVQFHLYISTSPCGDARIFSPHEPILEGSRSYTQAGVQWCNHGSLQPRPPGLLSDPSTSTFQGAGTTEPADRHPNRKARGQLRTKIESGEGTIPVRSNASIQTWDGVLQGERLLTMSCSDKIARWNVVGIQGSLLSIFVEPIYFSSIILGSLYHGDHLSRAMYQRISNIEDLPPLYTLNKPLLSGISNAEARQPGKAPNFSVNWTVGDSAIEVINATTGKDELGRASRLCKHALYCRWMRVHGKVPSHLLRSKITKPNVYHESKLAAKEYQAAKARLFTAFIKAGLGAWVEKPTEQDQFSLTP.

Residues 1–79 (MDIEDEENMS…RRKTPGPVLP (79 aa)) are disordered. Phosphoserine is present on Ser26. The segment covering 33 to 49 (PGPGEGSQLSNGGGGGP) has biased composition (gly residues). The segment covering 63–73 (SKYRLKKRRKT) has biased composition (basic residues). Residues 78-144 (LPKNALMQLN…AEKALRSFVQ (67 aa)) enclose the DRBM 1 domain. Interaction with substrate RNA stretches follow at residues 83–88 (LMQLNE) and 104–105 (VH). Ser149 is subject to Phosphoserine. In terms of domain architecture, DRBM 2 spans 231-298 (PSGKNPVMIL…AQSALAAIFN (68 aa)). Interaction with substrate RNA regions lie at residues 237 to 242 (VMILNE) and His259. An A to I editase domain is found at 370–737 (SVSTGTKCIN…VEKPTEQDQF (368 aa)). His394 lines the Zn(2+) pocket. Glu396 acts as the Proton donor in catalysis. Arg400 and Arg401 together coordinate 1D-myo-inositol hexakisphosphate. Cys451 provides a ligand contact to Zn(2+). The disordered stretch occupies residues 486 to 518 (RPPGLLSDPSTSTFQGAGTTEPADRHPNRKARG). Polar residues predominate over residues 493–503 (DPSTSTFQGAG). A Zn(2+)-binding site is contributed by Cys556. 6 residues coordinate 1D-myo-inositol hexakisphosphate: Lys559, Arg562, Lys669, Lys702, Lys712, and Lys730.

Homodimer. Homodimerization is essential for its catalytic activity. Can form heterodimers with isoform 5 of ADAR/ADAR1. It depends on 1D-myo-inositol hexakisphosphate as a cofactor. In terms of tissue distribution, highly expressed in brain and heart and at lower levels in placenta. Fair expression in lung, liver and kidney. Detected in brain, heart, kidney, lung and liver (at protein level). As to expression, highly expressed in hippocampus and colon. Expressed in pediatric astrocytomas and the protein has a decreased RNA-editing activity. The decrease in RNA editing correlates with the grade of malignancy of the tumors, with the high grade tumors showing lower editing is seen.

The protein localises to the nucleus. It is found in the nucleolus. It carries out the reaction adenosine in double-stranded RNA + H2O + H(+) = inosine in double-stranded RNA + NH4(+). In terms of biological role, catalyzes the hydrolytic deamination of adenosine to inosine in double-stranded RNA (dsRNA) referred to as A-to-I RNA editing. This may affect gene expression and function in a number of ways that include mRNA translation by changing codons and hence the amino acid sequence of proteins; pre-mRNA splicing by altering splice site recognition sequences; RNA stability by changing sequences involved in nuclease recognition; genetic stability in the case of RNA virus genomes by changing sequences during viral RNA replication; and RNA structure-dependent activities such as microRNA production or targeting or protein-RNA interactions. Can edit both viral and cellular RNAs and can edit RNAs at multiple sites (hyper-editing) or at specific sites (site-specific editing). Its cellular RNA substrates include: bladder cancer-associated protein (BLCAP), neurotransmitter receptors for glutamate (GRIA2 and GRIK2) and serotonin (HTR2C), GABA receptor (GABRA3) and potassium voltage-gated channel (KCNA1). Site-specific RNA editing of transcripts encoding these proteins results in amino acid substitutions which consequently alter their functional activities. Edits GRIA2 at both the Q/R and R/G sites efficiently but converts the adenosine in hotspot1 much less efficiently. Can exert a proviral effect towards human immunodeficiency virus type 1 (HIV-1) and enhances its replication via both an editing-dependent and editing-independent mechanism. The former involves editing of adenosines in the 5'UTR while the latter occurs via suppression of EIF2AK2/PKR activation and function. Can inhibit cell proliferation and migration and can stimulate exocytosis. Has a lower catalytic activity than isoform 2. Functionally, has a higher catalytic activity than isoform 1. The protein is Double-stranded RNA-specific editase 1 of Homo sapiens (Human).